We begin with the raw amino-acid sequence, 391 residues long: Solute carrier family 35 member F2 (391 aa).

Transmembrane regions (helical) follow at residues 39 to 59, 73 to 93, 108 to 128, 137 to 157, 165 to 185, 200 to 220, 230 to 250, 267 to 287, 294 to 314, and 318 to 338; these read MLLS…IRLT, LFQS…TLAV, WWKY…VVKA, IQLL…FFLL, FIGA…DVLM, LIGD…SVCQ, VELL…QLAI, LLYV…PVVI, AINL…LFLF, and FSGL…FYFS. Positions 361-391 are disordered; that stretch reads VELPSSGQLEPSVTYTSLSQETEEEPRVRVA. The span at 365–380 shows a compositional bias: polar residues; that stretch reads SSGQLEPSVTYTSLSQ.

The protein belongs to the SLC35F solute transporter family.

It is found in the membrane. In terms of biological role, putative solute transporter. The polypeptide is Solute carrier family 35 member F2 (slc35f2) (Xenopus tropicalis (Western clawed frog)).